The sequence spans 495 residues: Alpha,alpha-trehalose-phosphate synthase [UDP-forming] 56 kDa subunit (495 aa).

Y102 and D156 together coordinate D-glucose 6-phosphate. Residues R293 and K298 each contribute to the UDP site. UDP-alpha-D-glucose contacts are provided by R293 and K298. D-glucose 6-phosphate is bound at residue R331. UDP contacts are provided by residues I370 and 396-400 (LVSYE). Residues I370 and 392–400 (DGMNLVSYE) each bind UDP-alpha-D-glucose.

The protein belongs to the glycosyltransferase 20 family. As to quaternary structure, the trehalose synthase complex is composed of the two catalytic subunits TPS1 and TPS2 and at least one of the two regulatory subunits TPS3 or TSL1.

It localises to the cytoplasm. The catalysed reaction is D-glucose 6-phosphate + UDP-alpha-D-glucose = alpha,alpha-trehalose 6-phosphate + UDP + H(+). It participates in carbohydrate biosynthesis. Its activity is regulated as follows. Activated by fructose 6-phosphate. Inorganic phosphate inhibits the synthase activity in the complex, but activates the synthase activity in the free monomeric form. Synthase catalytic subunit of the trehalose synthase complex that catalyzes the production of trehalose from glucose-6-phosphate and UDP-alpha-D-glucose in a two step process. Can function independently of the complex. The polypeptide is Alpha,alpha-trehalose-phosphate synthase [UDP-forming] 56 kDa subunit (Saccharomyces cerevisiae (strain ATCC 204508 / S288c) (Baker's yeast)).